The following is a 364-amino-acid chain: Lipid-A-disaccharide synthase (364 aa).

Belongs to the LpxB family.

The enzyme catalyses a lipid X + a UDP-2-N,3-O-bis[(3R)-3-hydroxyacyl]-alpha-D-glucosamine = a lipid A disaccharide + UDP + H(+). Its pathway is bacterial outer membrane biogenesis; LPS lipid A biosynthesis. Condensation of UDP-2,3-diacylglucosamine and 2,3-diacylglucosamine-1-phosphate to form lipid A disaccharide, a precursor of lipid A, a phosphorylated glycolipid that anchors the lipopolysaccharide to the outer membrane of the cell. The chain is Lipid-A-disaccharide synthase from Campylobacter jejuni (strain RM1221).